Here is a 108-residue protein sequence, read N- to C-terminus: Trp operon repressor homolog (108 aa).

A DNA-binding region spans residues 59 to 82 (QRQISQLLGVGVATITRGSNELKS).

This sequence belongs to the TrpR family. As to quaternary structure, homodimer.

The protein resides in the cytoplasm. This protein is an aporepressor. When complexed with L-tryptophan it binds the operator region of the trp operon and prevents the initiation of transcription. The protein is Trp operon repressor homolog of Aliivibrio salmonicida (strain LFI1238) (Vibrio salmonicida (strain LFI1238)).